The chain runs to 305 residues: uncharacterized protein (305 aa).

This is an uncharacterized protein from Sinorhizobium fredii (strain NBRC 101917 / NGR234).